Consider the following 169-residue polypeptide: Phosphopantetheine adenylyltransferase (169 aa).

Threonine 9 is a binding site for substrate. Residues 9-10 and histidine 17 each bind ATP; that span reads TF. Residues lysine 41, leucine 73, and arginine 87 each contribute to the substrate site. Residues 88-90, glutamate 98, and 123-129 each bind ATP; these read GLR and YQFISGT.

It belongs to the bacterial CoaD family. Homohexamer. Requires Mg(2+) as cofactor.

It localises to the cytoplasm. The enzyme catalyses (R)-4'-phosphopantetheine + ATP + H(+) = 3'-dephospho-CoA + diphosphate. It functions in the pathway cofactor biosynthesis; coenzyme A biosynthesis; CoA from (R)-pantothenate: step 4/5. Functionally, reversibly transfers an adenylyl group from ATP to 4'-phosphopantetheine, yielding dephospho-CoA (dPCoA) and pyrophosphate. In Bordetella bronchiseptica (strain ATCC BAA-588 / NCTC 13252 / RB50) (Alcaligenes bronchisepticus), this protein is Phosphopantetheine adenylyltransferase.